The following is a 196-amino-acid chain: Calcium channel flower (196 aa).

3 consecutive transmembrane segments (helical) span residues 35-55, 70-92, and 113-133; these read LGIV…LSII, LAGF…QVGS, and AVPP…GLIF.

This sequence belongs to the calcium channel flower family. Homomultimer. Associates with the dally/ magu complex.

The protein resides in the cell membrane. It localises to the cytoplasmic vesicle. The protein localises to the secretory vesicle. It is found in the synaptic vesicle membrane. Its subcellular location is the presynaptic cell membrane. The protein resides in the endosome. Its activity is regulated as follows. Channel activity is inhibited by La(3+), which reduces Ca(2+) influx and thus inhibits it's function in promoting activity-dependent bulk endocytosis (ADBE) in response to high stimuli. Functionally, transmembrane protein which mediates synaptic endocytosis, fitness-based cell culling, neuronal culling, morphogen gradient scaling, and calcium transport. Regulates synaptic endocytosis and hence couples exo- with endocytosis. Controls two major modes of synaptic vesicle (SV) endocytosis in the synaptic boutons of neuromuscular junctions (NMJs); Ca(2+) channel-independent Clathrin-mediated endocytosis (CME) in response to mild stimulation, and Ca(2+) channel-dependent activity-dependent bulk endocytosis (ADBE) in response to strong stimulation. Functions in ADBE and subsequent SV reformation from bulk endosomes by initiating Ca(2+) channel-dependent phosphatidylinositol 4,5-bisphosphate (PtdIns(4,5)P2) compartmentalization in synaptic boutons. There it acts at the periactive zone to provide the low Ca(2+) levels required to initiate Calcineurin activation and upregulate PtdIns(4,5)P2. Conversely PtdIns(4,5)P2 enhances fwe Ca(2+) channel-activity, establishing a positive feedback loop that induces PtdIns(4,5)P2 microdomain at the periactive zone. These microdomains trigger bulk membrane invagination (i.e. ADBE) by triggering actin polymerization while also promoting localization of fwe to bulk endosomes, thereby removing the ADBE trigger to reduce endocytosis and prevent excess membrane uptake. PtdIns(4,5)P2 then promotes SV reformation from the bulk endosomes, to coordinate ADBE and subsequent SV reformation. Different combinations of the flower isoforms at the cell membrane are also required for the identification and elimination of suboptimal or supernumerary cells during development, regeneration, and adulthood. Required for the recognition and elimination of unfit cells in the developing wing during cell competition. In the developing pupal retina, mediates the elimination of unwanted postmitotic neurons, including supernumerary photoreceptor neurons that form at the periphery of the retina and are contained within incomplete ommatidia units. Also required for efficient elimination and replacement of old neurons by newly generated neurons during regeneration in the adult brain following mechanical injury. Downstream of the flower fitness fingerprints, cells identified as unwanted or unfit are eliminated via apoptosis through the expression of ahuizotl (azot). However, the cells marked for elimination by the flower isoforms only undergo apoptosis if additional thresholds are met; (1) their neighboring fit/healthy cells express different levels of the fwe isoforms, and (2) the levels of the protective signal SPARC expressed by the loser or unwanted cells are unable to inhibit caspase activation. These additional thresholds for flower-mediated apoptosis, allows useful cells to recover from transient and limited stress before they are unnecessarily eliminated. Functions with dally and magu in a mechanism of scaling, which utilises apoptosis to ensure that the dpp morphogen gradient, which mediates organ growth, remains proportional to the size of the growing wing. In this mechanism, fwe represses dally- and Magu-dependent activity in expanding the gradient, and dally/Magu inhibits fwe-dependent apoptosis to keep cell death rate low. When the levels of these different proteins are optimally regulated the gradient correctly scales with organ growth but when this fails, fwe-mediated apoptosis is activated to trim the developing tissue to match the correct size of the gradient. This Drosophila grimshawi (Hawaiian fruit fly) protein is Calcium channel flower.